The chain runs to 973 residues: Peptidyl-glycine alpha-amidating monooxygenase (973 aa).

A signal peptide spans 1–20 (MAGRVPSLLVLLVFPSSCLA). Residues 1-494 (MAGRVPSLLV…EGTWEPEHTG (494 aa)) are peptidylglycine alpha-hydroxylating monooxygenase. The propeptide occupies 21 to 30 (FRSPLSVFKR). The Intragranular portion of the chain corresponds to 31 to 863 (FKETTRPFSN…QKLIKEPGSG (833 aa)). 5 disulfides stabilise this stretch: C42/C181, C76/C121, C109/C126, C222/C329, and C288/C310. H102 and H103 together coordinate Cu(2+). The Cu(2+) site is built by H167, H237, H239, and M309. The tract at residues 495-817 (DFHMEEALDW…LTEKLEHRSV (323 aa)) is peptidyl-alpha-hydroxyglycine alpha-amidating lyase. NHL repeat units follow at residues 498–541 (MEEA…NSFD), 567–608 (AAVL…LDPN), 617–662 (LGRS…FSPS), and 670–714 (GEES…FKTD). Residue V517 coordinates Ca(2+). An a protein-binding site is contributed by R530. Residue H582 participates in Zn(2+) binding. Residue L584 coordinates Ca(2+). C631 and C652 are joined by a disulfide. Position 651 (Y651) interacts with a protein. Position 687 (H687) interacts with Zn(2+). C699 and C710 are disulfide-bonded. An a protein-binding site is contributed by R703. N-linked (GlcNAc...) asparagine glycosylation is present at N762. The stretch at 766 to 809 (GEIIDIFKPVRKHFDMPHDIVASEDGTVYIGDAHTNTVWKFTLT) is one NHL 5 repeat. Residue H783 participates in Zn(2+) binding. Ca(2+) is bound at residue D784. The chain crosses the membrane as a helical span at residues 864-887 (VPVVLITTLLVIPVVVLLAIAIFI). I875 and R893 each carry sulfotyrosine. At 888–973 (RWKKSRAFGD…PLPALAPSSS (86 aa)) the chain is on the cytoplasmic side. Phosphoserine occurs at positions 918, 929, and 942. The interval 925 to 942 (NFFASRKGYSRKGFDRLS) is interaction with RASSF9. Positions 937–973 (GFDRLSTEGSDQEKEDDGSESEEEYSAPLPALAPSSS) are disordered. T943 is modified (phosphothreonine). S946 is subject to Phosphoserine; by UHMK1; in vitro. Over residues 949 to 961 (EKEDDGSESEEEY) the composition is skewed to acidic residues. S957 carries the post-translational modification Phosphoserine. The segment covering 962 to 973 (SAPLPALAPSSS) has biased composition (low complexity).

In the C-terminal section; belongs to the peptidyl-alpha-hydroxyglycine alpha-amidating lyase family. This sequence in the N-terminal section; belongs to the copper type II ascorbate-dependent monooxygenase family. In terms of assembly, monomer. Interacts with RASSF9. Zn(2+) serves as cofactor. Requires Cu(2+) as cofactor.

The protein resides in the cytoplasmic vesicle. It is found in the secretory vesicle membrane. Its subcellular location is the membrane. It localises to the secreted. The catalysed reaction is a [peptide]-C-terminal glycine + 2 L-ascorbate + O2 = a [peptide]-C-terminal (2S)-2-hydroxyglycine + 2 monodehydro-L-ascorbate radical + H2O. It catalyses the reaction a [peptide]-C-terminal (2S)-2-hydroxyglycine = a [peptide]-C-terminal amide + glyoxylate. The enzyme catalyses N-dodecanoylglycine + 2 L-ascorbate + O2 = N-dodecanoyl-(2S)-hydroxyglycine + 2 monodehydro-L-ascorbate radical + H2O. It carries out the reaction N-dodecanoyl-(2S)-hydroxyglycine = dodecanamide + glyoxylate. The catalysed reaction is N-(9Z,12Z,15Z)-octadecatrienoylglycine + 2 L-ascorbate + O2 = N-(9Z,12Z,15Z)-octadecatrienoyl-(2S)-hydroxyglycine + 2 monodehydro-L-ascorbate radical + H2O. It catalyses the reaction N-(9Z,12Z,15Z)-octadecatrienoyl-(2S)-hydroxyglycine = (9Z,12Z,15Z)-octadecatrienamide + glyoxylate. The enzyme catalyses N-(9Z-octadecenoyl)glycine + 2 L-ascorbate + O2 = N-(9Z-octadecenoyl)-(2S)-hydroxyglycine + 2 monodehydro-L-ascorbate radical + H2O. It carries out the reaction N-(9Z-octadecenoyl)-(2S)-hydroxyglycine = (9Z)-octadecenamide + glyoxylate. The catalysed reaction is N-tetradecanoylglycine + 2 L-ascorbate + O2 = N-tetradecanoyl-(2S)-hydroxyglycine + 2 monodehydro-L-ascorbate radical + H2O. It catalyses the reaction N-tetradecanoyl-(2S)-hydroxyglycine = tetradecamide + glyoxylate. The enzyme catalyses N-decanoylglycine + 2 L-ascorbate + O2 = N-decanoyl-(2S)-hydroxyglycine + 2 monodehydro-L-ascorbate radical + H2O. It carries out the reaction N-decanoyl-(2S)-hydroxyglycine = decanamide + glyoxylate. The catalysed reaction is N-octanoylglycine + 2 L-ascorbate + O2 = N-octanoyl-(2S)-hydroxyglycine + 2 monodehydro-L-ascorbate radical + H2O. It catalyses the reaction N-octanoyl-(2S)-hydroxyglycine = octanamide + glyoxylate. PAM activity is inhibited by EDTA, phenylglyoxal and diethyl pyrocarbonate. PAL activity is stimulated by cadmium and inhibited by mercury. Functionally, bifunctional enzyme that catalyzes amidation of the C-terminus of proteins. Alpha-amidation is present at the C-terminus of many endocrine hormones and neuropeptides and is required for their activity. C-terminal amidation also takes place in response to protein fragmentation triggered by oxidative stress, promoting degradation of amidated protein fragments by the proteasome. Alpha-amidation involves two sequential reactions, both of which are catalyzed by separate catalytic domains of the enzyme. The first step, catalyzed by peptidyl alpha-hydroxylating monooxygenase (PHM) domain, is the copper-, ascorbate-, and O2- dependent stereospecific hydroxylation (with S stereochemistry) at the alpha-carbon (C-alpha) of the C-terminal glycine of the peptidylglycine substrate. The second step, catalyzed by the peptidylglycine amidoglycolate lyase (PAL) domain, is the zinc-dependent cleavage of the N-C-alpha bond, producing the alpha-amidated peptide and glyoxylate. Similarly, catalyzes the two-step conversion of an N-fatty acylglycine to a primary fatty acid amide and glyoxylate. This chain is Peptidyl-glycine alpha-amidating monooxygenase, found in Homo sapiens (Human).